The following is a 426-amino-acid chain: Bifunctional protein GlmU (426 aa).

The interval 1–216 (MSEVDVVILA…WHDILGVNTQ (216 aa)) is pyrophosphorylase. UDP-N-acetyl-alpha-D-glucosamine is bound by residues 9–12 (LAAG), lysine 23, and glutamine 69. Position 97 (aspartate 97) interacts with Mg(2+). UDP-N-acetyl-alpha-D-glucosamine contacts are provided by glycine 132, glutamate 148, asparagine 163, and asparagine 214. Asparagine 214 contacts Mg(2+). Positions 217–237 (QQLAAVSKIARKRINDQIMAN) are linker. Residues 238–426 (GVTMIDPLTT…AKHDQRDDQP (189 aa)) form an N-acetyltransferase region. 2 residues coordinate UDP-N-acetyl-alpha-D-glucosamine: arginine 286 and lysine 304. Residue histidine 316 is the Proton acceptor of the active site. Residues tyrosine 319 and asparagine 330 each coordinate UDP-N-acetyl-alpha-D-glucosamine. Acetyl-CoA-binding positions include alanine 333, 339-340 (NY), serine 358, alanine 376, and arginine 393.

It in the N-terminal section; belongs to the N-acetylglucosamine-1-phosphate uridyltransferase family. This sequence in the C-terminal section; belongs to the transferase hexapeptide repeat family. Homotrimer. Mg(2+) serves as cofactor.

The protein localises to the cytoplasm. The enzyme catalyses alpha-D-glucosamine 1-phosphate + acetyl-CoA = N-acetyl-alpha-D-glucosamine 1-phosphate + CoA + H(+). It carries out the reaction N-acetyl-alpha-D-glucosamine 1-phosphate + UTP + H(+) = UDP-N-acetyl-alpha-D-glucosamine + diphosphate. Its pathway is nucleotide-sugar biosynthesis; UDP-N-acetyl-alpha-D-glucosamine biosynthesis; N-acetyl-alpha-D-glucosamine 1-phosphate from alpha-D-glucosamine 6-phosphate (route II): step 2/2. The protein operates within nucleotide-sugar biosynthesis; UDP-N-acetyl-alpha-D-glucosamine biosynthesis; UDP-N-acetyl-alpha-D-glucosamine from N-acetyl-alpha-D-glucosamine 1-phosphate: step 1/1. It participates in bacterial outer membrane biogenesis; LPS lipid A biosynthesis. Catalyzes the last two sequential reactions in the de novo biosynthetic pathway for UDP-N-acetylglucosamine (UDP-GlcNAc). The C-terminal domain catalyzes the transfer of acetyl group from acetyl coenzyme A to glucosamine-1-phosphate (GlcN-1-P) to produce N-acetylglucosamine-1-phosphate (GlcNAc-1-P), which is converted into UDP-GlcNAc by the transfer of uridine 5-monophosphate (from uridine 5-triphosphate), a reaction catalyzed by the N-terminal domain. This Oenococcus oeni (strain ATCC BAA-331 / PSU-1) protein is Bifunctional protein GlmU.